The chain runs to 141 residues: Protein X (141 aa).

Residues 24–48 are compositionally biased toward low complexity; sequence QSSGPSFPRPAAGSAASSASSPSPS. Residues 24-52 form a disordered region; sequence QSSGPSFPRPAAGSAASSASSPSPSDESD. Positions 68 to 113 are mitochondrial targeting sequence; that stretch reads PCCLVFTCAELRTMDSTVNFVSWHANRQLGMPSKDLWTPYIKDQLL.

Belongs to the orthohepadnavirus protein X family. May form homodimer. May interact with host CEBPA, CFLAR, CREB1, DDB1, E4F1, HBXIP, HSPD1/HSP60, NFKBIA, POLR2E and SMAD4. Interacts with host SMC5-SMC6 complex and induces its degradation. Interacts with host TRPC4AP; leading to prevent ubiquitination of TRPC4AP. Interacts with host PLSCR1; this interaction promotes ubiquitination and degradation of HBx and impairs HBx-mediated cell proliferation. A fraction may be phosphorylated in insect cells and HepG2 cells, a human hepatoblastoma cell line. Phosphorylated in vitro by host protein kinase C or mitogen-activated protein kinase. N-acetylated in insect cells.

The protein localises to the host cytoplasm. The protein resides in the host nucleus. Its subcellular location is the host mitochondrion. Functionally, multifunctional protein that plays a role in silencing host antiviral defenses and promoting viral transcription. Does not seem to be essential for HBV infection. May be directly involved in development of cirrhosis and liver cancer (hepatocellular carcinoma). Most of cytosolic activities involve modulation of cytosolic calcium. The effect on apoptosis is controversial depending on the cell types in which the studies have been conducted. May induce apoptosis by localizing in mitochondria and causing loss of mitochondrial membrane potential. May also modulate apoptosis by binding host CFLAR, a key regulator of the death-inducing signaling complex (DISC). Promotes viral transcription by using the host E3 ubiquitin ligase DDB1 to target the SMC5-SMC6 complex to proteasomal degradation. This host complex would otherwise bind to viral episomal DNA, and prevents its transcription. Moderately stimulates transcription of many different viral and cellular transcription elements. Promoters and enhancers stimulated by HBx contain DNA binding sites for NF-kappa-B, AP-1, AP-2, c-EBP, ATF/CREB, or the calcium-activated factor NF-AT. The chain is Protein X from Woodchuck hepatitis B virus (isolate 7) (WHV).